Consider the following 295-residue polypeptide: Ribosomal protein L11 methyltransferase (295 aa).

S-adenosyl-L-methionine-binding residues include threonine 150, glycine 171, aspartate 193, and asparagine 232.

The protein belongs to the methyltransferase superfamily. PrmA family.

Its subcellular location is the cytoplasm. The enzyme catalyses L-lysyl-[protein] + 3 S-adenosyl-L-methionine = N(6),N(6),N(6)-trimethyl-L-lysyl-[protein] + 3 S-adenosyl-L-homocysteine + 3 H(+). In terms of biological role, methylates ribosomal protein L11. The chain is Ribosomal protein L11 methyltransferase from Neisseria meningitidis serogroup B (strain ATCC BAA-335 / MC58).